The chain runs to 306 residues: Pantothenate kinase (306 aa).

91–98 contacts ATP; the sequence is GSVAVGKS.

The protein belongs to the prokaryotic pantothenate kinase family.

The protein localises to the cytoplasm. It carries out the reaction (R)-pantothenate + ATP = (R)-4'-phosphopantothenate + ADP + H(+). Its pathway is cofactor biosynthesis; coenzyme A biosynthesis; CoA from (R)-pantothenate: step 1/5. This Streptococcus gordonii (strain Challis / ATCC 35105 / BCRC 15272 / CH1 / DL1 / V288) protein is Pantothenate kinase.